Here is a 530-residue protein sequence, read N- to C-terminus: Phosphoenolpyruvate carboxykinase (ATP) (530 aa).

Substrate-binding residues include Arg58, Tyr195, and Lys201. Residues Lys201, His220, and 236–244 each bind ATP; that span reads GLSGTGKTT. Lys201 and His220 together coordinate Mn(2+). Asp257 contacts Mn(2+). Residues Glu285, Arg321, 440-441, and Thr446 contribute to the ATP site; that span reads RI. Arg321 is a substrate binding site.

The protein belongs to the phosphoenolpyruvate carboxykinase (ATP) family. It depends on Mn(2+) as a cofactor.

The protein resides in the cytoplasm. It carries out the reaction oxaloacetate + ATP = phosphoenolpyruvate + ADP + CO2. The protein operates within carbohydrate biosynthesis; gluconeogenesis. Involved in the gluconeogenesis. Catalyzes the conversion of oxaloacetate (OAA) to phosphoenolpyruvate (PEP) through direct phosphoryl transfer between the nucleoside triphosphate and OAA. This is Phosphoenolpyruvate carboxykinase (ATP) from Staphylococcus aureus (strain bovine RF122 / ET3-1).